The chain runs to 249 residues: MAEQASFIDRLSARFAGAKVIVVEPRGEVTLEVPAAEWHATALALRDEFGFEQAVDLCGVDYLGYGSDEWDTADVSSQGFSRGVEGKAQGRFAWGEFPTEENGADGARPQHMPTQRFAVVAQLRSYQHNLMMHLRCFAPDEALPVVSSLTGIWPGLNWFEREAFDLYGVIFEGHPDLRRILTDYGFVGHPFRKDFPLIGNVEVRYDEEKKRVIYEPVTSVEPRVGVPRVIRDDARLQTAEGERAQEAVK.

This sequence belongs to the complex I 30 kDa subunit family. In terms of assembly, NDH-1 is composed of 14 different subunits. Subunits NuoB, C, D, E, F, and G constitute the peripheral sector of the complex.

The protein resides in the cell inner membrane. The enzyme catalyses a quinone + NADH + 5 H(+)(in) = a quinol + NAD(+) + 4 H(+)(out). Its function is as follows. NDH-1 shuttles electrons from NADH, via FMN and iron-sulfur (Fe-S) centers, to quinones in the respiratory chain. The immediate electron acceptor for the enzyme in this species is believed to be ubiquinone. Couples the redox reaction to proton translocation (for every two electrons transferred, four hydrogen ions are translocated across the cytoplasmic membrane), and thus conserves the redox energy in a proton gradient. The sequence is that of NADH-quinone oxidoreductase subunit C from Stenotrophomonas maltophilia (strain R551-3).